A 100-amino-acid chain; its full sequence is Integration host factor subunit alpha (100 aa).

It belongs to the bacterial histone-like protein family. In terms of assembly, heterodimer of an alpha and a beta chain.

Functionally, this protein is one of the two subunits of integration host factor, a specific DNA-binding protein that functions in genetic recombination as well as in transcriptional and translational control. This Buchnera aphidicola subsp. Schizaphis graminum (strain Sg) protein is Integration host factor subunit alpha.